Here is a 146-residue protein sequence, read N- to C-terminus: Large ribosomal subunit protein uL24 (146 aa).

Residues 1 to 33 (MKYNPRVTSSRRRNRKPHFTASSSERRVXMSSP) form a disordered region. The segment covering 9-18 (SSRRRNRKPH) has biased composition (basic residues).

This sequence belongs to the universal ribosomal protein uL24 family.

This Brassica campestris (Field mustard) protein is Large ribosomal subunit protein uL24 (RPL26).